We begin with the raw amino-acid sequence, 585 residues long: Nucleus accumbens-associated protein 2 (585 aa).

The 65-residue stretch at 30-94 (CDVSIVVKGQ…CYTGKLTMAA (65 aa)) folds into the BTB domain. Residues lysine 171 and lysine 215 each participate in a glycyl lysine isopeptide (Lys-Gly) (interchain with G-Cter in SUMO2) cross-link. The segment covering 238–261 (PYPQGERTSPGASSLPTTDSSTSY) has biased composition (polar residues). The disordered stretch occupies residues 238–269 (PYPQGERTSPGASSLPTTDSSTSYHNEDEDDD). Glycyl lysine isopeptide (Lys-Gly) (interchain with G-Cter in SUMO2) cross-links involve residues lysine 296, lysine 426, and lysine 453. In terms of domain architecture, BEN spans 348–445 (GSGVYITRGQ…DMCTNARRVR (98 aa)). The disordered stretch occupies residues 541–585 (APEQLPADGQSSPQAFEQGNTSSSRPQTPVATATRRPEGTYAGTL). The segment covering 549–571 (GQSSPQAFEQGNTSSSRPQTPVA) has biased composition (polar residues).

Homooligomer; mediated by the BTB domain. Interacts with the NuRD complex. Interacts (via C-terminal part) with HDAC2. Interacts (via BTB domain) with MTA1, MTA2 and MTA3.

The protein resides in the nucleus. Functionally, functions as a transcriptional repressor through its association with the NuRD complex. Recruits the NuRD complex to the promoter of MDM2, leading to the repression of MDM2 transcription and subsequent stability of p53/TP53. The sequence is that of Nucleus accumbens-associated protein 2 (Nacc2) from Rattus norvegicus (Rat).